Here is a 217-residue protein sequence, read N- to C-terminus: Probable transaldolase (217 aa).

Lys83 acts as the Schiff-base intermediate with substrate in catalysis.

This sequence belongs to the transaldolase family. Type 3B subfamily.

Its subcellular location is the cytoplasm. It catalyses the reaction D-sedoheptulose 7-phosphate + D-glyceraldehyde 3-phosphate = D-erythrose 4-phosphate + beta-D-fructose 6-phosphate. The protein operates within carbohydrate degradation; pentose phosphate pathway; D-glyceraldehyde 3-phosphate and beta-D-fructose 6-phosphate from D-ribose 5-phosphate and D-xylulose 5-phosphate (non-oxidative stage): step 2/3. In terms of biological role, transaldolase is important for the balance of metabolites in the pentose-phosphate pathway. This is Probable transaldolase from Caulobacter vibrioides (strain NA1000 / CB15N) (Caulobacter crescentus).